Consider the following 323-residue polypeptide: ATP synthase gamma chain (323 aa).

This sequence belongs to the ATPase gamma chain family. F-type ATPases have 2 components, CF(1) - the catalytic core - and CF(0) - the membrane proton channel. CF(1) has five subunits: alpha(3), beta(3), gamma(1), delta(1), epsilon(1). CF(0) has three main subunits: a, b and c.

Its subcellular location is the cell inner membrane. In terms of biological role, produces ATP from ADP in the presence of a proton gradient across the membrane. The gamma chain is believed to be important in regulating ATPase activity and the flow of protons through the CF(0) complex. This is ATP synthase gamma chain from Rickettsia africae (strain ESF-5).